A 602-amino-acid chain; its full sequence is Transcription factor COE4 (602 aa).

Residues 64–67 (RKSN) are interaction with DNA. The C5-type zinc-finger motif lies at 152 to 171 (CRVLLTHEIMCSRCCDRKSC). Interaction with DNA stretches follow at residues 198–205 (NCLKNAGN) and 237–240 (NNSK). The region spanning 256-338 (PCIKAISPGE…CKGCPGRFVY (83 aa)) is the IPT/TIG domain. Disordered regions lie at residues 448 to 476 (PEPGYARSCSSASPRGFAPSPGSQQSGYG) and 558 to 602 (PVLR…LAYS). The segment covering 560–569 (LRPPSSPPQA) has biased composition (pro residues).

This sequence belongs to the COE family. As to quaternary structure, forms either a homodimer or a heterodimer with a related family member. Interacts with MAPK3/ERK1. Interacts with STAT5A. As to expression, most highly expressed in cytotoxic NK cells, especially CD16(+) NK cells, followed by CD8(+) T-cells.

It is found in the nucleus. In terms of biological role, transcription factor. Binds to specific sequence motif 5'-CCCNNG[GA]G-3' in regulatory elements of putative target immunoregulatory genes such as NKG7, GZMA, and TBX21. Positively modulates transcription of NKG7. May play a role in regulating FAS/CD95-mediated apoptosis in cytotoxic NK cells and T-cells, probably downstream of interleukin IL2 signaling. In Homo sapiens (Human), this protein is Transcription factor COE4 (EBF4).